A 309-amino-acid chain; its full sequence is Maintenance of mitochondrial morphology protein 1 (309 aa).

Topologically, residues 1 to 16 are lumenal; the sequence is MGNAYIFSLQPTFTQG. Residues 17–37 traverse the membrane as a helical segment; the sequence is LILGQFSILFLLVLVLKYLFF. The Cytoplasmic segment spans residues 38–309; that stretch reads DTVSDHAYRT…EQQAGELPVN (272 aa). Residues 84–293 enclose the SMP-LTD domain; it reads ECESADWLNA…LPGLASVSEV (210 aa).

This sequence belongs to the MMM1 family. Homodimer. Component of the ER-mitochondria encounter structure (ERMES) or MDM complex, composed of MMM1, MDM10, MDM12 and MDM34. An MMM1 homodimer associates with one molecule of MDM12 on each side in a pairwise head-to-tail manner, and the SMP-LTD domains of MMM1 and MDM12 generate a continuous hydrophobic tunnel for phospholipid trafficking.

The protein resides in the endoplasmic reticulum membrane. Component of the ERMES/MDM complex, which serves as a molecular tether to connect the endoplasmic reticulum (ER) and mitochondria. Components of this complex are involved in the control of mitochondrial shape and protein biogenesis, and function in nonvesicular lipid trafficking between the ER and mitochondria. The MDM12-MMM1 subcomplex functions in the major beta-barrel assembly pathway that is responsible for biogenesis of all outer membrane beta-barrel proteins, and acts in a late step after the SAM complex. The MDM10-MDM12-MMM1 subcomplex further acts in the TOM40-specific pathway after the action of the MDM12-MMM1 complex. Essential for establishing and maintaining the structure of mitochondria and maintenance of mtDNA nucleoids. In Postia placenta (strain ATCC 44394 / Madison 698-R) (Brown rot fungus), this protein is Maintenance of mitochondrial morphology protein 1.